The sequence spans 351 residues: Phosphate acyltransferase (351 aa).

It belongs to the PlsX family. As to quaternary structure, homodimer. Probably interacts with PlsY.

It localises to the cytoplasm. The enzyme catalyses a fatty acyl-[ACP] + phosphate = an acyl phosphate + holo-[ACP]. It functions in the pathway lipid metabolism; phospholipid metabolism. In terms of biological role, catalyzes the reversible formation of acyl-phosphate (acyl-PO(4)) from acyl-[acyl-carrier-protein] (acyl-ACP). This enzyme utilizes acyl-ACP as fatty acyl donor, but not acyl-CoA. In Neisseria meningitidis serogroup A / serotype 4A (strain DSM 15465 / Z2491), this protein is Phosphate acyltransferase.